We begin with the raw amino-acid sequence, 90 residues long: Defensin-like protein 178 (90 aa).

Residues 1–23 form the signal peptide; that stretch reads MAKATSSLVVPIIFLVIFALVEQ. 4 disulfide bridges follow: cysteine 27/cysteine 66, cysteine 36/cysteine 55, cysteine 39/cysteine 60, and cysteine 43/cysteine 62.

It belongs to the DEFL family.

It localises to the secreted. The protein is Defensin-like protein 178 (LCR64) of Arabidopsis thaliana (Mouse-ear cress).